Here is a 433-residue protein sequence, read N- to C-terminus: UDP-N-acetylmuramate--L-alanine ligase (433 aa).

Residue 108 to 114 (GAHGKTS) participates in ATP binding.

It belongs to the MurCDEF family.

The protein localises to the cytoplasm. The catalysed reaction is UDP-N-acetyl-alpha-D-muramate + L-alanine + ATP = UDP-N-acetyl-alpha-D-muramoyl-L-alanine + ADP + phosphate + H(+). The protein operates within cell wall biogenesis; peptidoglycan biosynthesis. Cell wall formation. The chain is UDP-N-acetylmuramate--L-alanine ligase from Anoxybacillus flavithermus (strain DSM 21510 / WK1).